A 399-amino-acid chain; its full sequence is Glutathione S-transferase LANCL1 (399 aa).

An N-acetylalanine modification is found at Ala-2. Lys-142 bears the N6-acetyllysine mark. A Zn(2+)-binding site is contributed by Cys-276. Glutathione is bound at residue Lys-317. Cys-322 and His-323 together coordinate Zn(2+). 364-367 (RTAD) contributes to the glutathione binding site.

Belongs to the LanC-like protein family. As to quaternary structure, interacts with the C-terminal of STOM. Interacts with the EPS8 SH3 domain. Interaction with EPS8 is inhibited by glutathione binding. As to expression, detected in spinal cord (at protein level). Ubiquitous. Strongly expressed in brain, testis, alveolar macrophages and epithelial cells of the lung, kidney and intestine. Expression in brain increases during the first postnatal month and remaining high in adult.

The protein localises to the cytoplasm. It localises to the cell membrane. It catalyses the reaction RX + glutathione = an S-substituted glutathione + a halide anion + H(+). It carries out the reaction 1-chloro-2,4-dinitrobenzene + glutathione = 2,4-dinitrophenyl-S-glutathione + chloride + H(+). Its function is as follows. Functions as a glutathione transferase. Catalyzes conjugation of the glutathione (GSH) to artificial substrates 1-chloro-2,4-dinitrobenzene (CDNB) and p-nitrophenyl acetate. Mitigates neuronal oxidative stress during normal postnatal development and in response to oxidative stresses probably through GSH antioxidant defense mechanism. May play a role in EPS8 signaling. Binds glutathione. This chain is Glutathione S-transferase LANCL1, found in Mus musculus (Mouse).